The following is an 899-amino-acid chain: AP-3 complex subunit delta (899 aa).

HEAT repeat units follow at residues 37–74 (QSPEQLHEFLTRVLSECREEVKHADFNMKTNAVLKLTY), 155–192 (ELARDICEDLFLMLHSTKPYIRKKAVTALFKVFLQYPE), 194–229 (LRDNFEKFVDRLEDDDLSVVSATVSVICELSKHNPQ), 231–267 (FIQLSPILYQMLIKVDNNWVIIRLLKLFTNLAQIEPK), 268–305 (LRVKILPNVLELMDSTTAISVVYESINCIVKGNMLNSD), 308–344 (DSAVACLDKLHDFCTSNDPNLRYLSCVLFYKIGKINT), 345–382 (DFIANFDVLILRLLVDVDVSIRSKTLELLEGIVTEDNL), 384–428 (DFVQ…ITAM), 480–518 (RTLAQIVQLVKSEDITARLPGVLKECIWCLGEYSSLLDN), 536–580 (ELQQ…LIIS), 590–613 (SEALEFLRLCLDSLSEDASDSLPL), and 614–656 (LLTE…TESE). Disordered regions lie at residues 668 to 701 (DGIVSPDVSDTESDSEMYVPGAAPKDKGSSPTHE), 741 to 768 (NLSNSKPSSSGSLVRLSSESKAKEKKKK), 782 to 801 (GVNTADVTDDRPSNTPSARN), and 849 to 899 (AAEE…LTTE). The segment covering 743-759 (SNSKPSSSGSLVRLSSE) has biased composition (low complexity). A coiled-coil region spans residues 841–862 (QRLLDESAAAEEEVVVVKKKKR). The span at 857–880 (VKKKKRSKDGSKSSKKKSRSKSKP) shows a compositional bias: basic residues.

The protein belongs to the adaptor complexes large subunit family. In terms of assembly, adaptor protein complex 3 (AP-3) is a heterotetramer composed of 2 large adaptins (APL5 and APL6), a medium adaptin (APM3) and a small adaptin (APS3).

The protein resides in the golgi apparatus. It localises to the cytoplasmic vesicle. The protein localises to the clathrin-coated vesicle membrane. Part of the AP-3 complex, an adaptor-related complex which is not clathrin-associated. The complex is associated with the Golgi region as well as more peripheral structures. It facilitates the budding of vesicles from the Golgi membrane and may be directly involved in trafficking to the vacuole. In Eremothecium gossypii (strain ATCC 10895 / CBS 109.51 / FGSC 9923 / NRRL Y-1056) (Yeast), this protein is AP-3 complex subunit delta (APL5).